The primary structure comprises 762 residues: Mitochondrial intermediate peptidase (762 aa).

Residues 1–28 (MQVRTLLTLGKKKVIGNRQCILSLYRKY) constitute a mitochondrion transit peptide. H544 lines the Zn(2+) pocket. The active site involves E545. Zn(2+) contacts are provided by H548 and H551.

Belongs to the peptidase M3 family. It depends on Zn(2+) as a cofactor.

The protein localises to the mitochondrion matrix. It catalyses the reaction Release of an N-terminal octapeptide as second stage of processing of some proteins imported into the mitochondrion.. Its function is as follows. Cleaves proteins, imported into the mitochondrion, to their mature size. While most mitochondrial precursor proteins are processed to the mature form in one step by mitochondrial processing peptidase (MPP), the sequential cleavage by MIP of an octapeptide after initial processing by MPP is a required step for a subgroup of nuclear-encoded precursor proteins destined for the matrix or the inner membrane. The polypeptide is Mitochondrial intermediate peptidase (oct1) (Schizosaccharomyces pombe (strain 972 / ATCC 24843) (Fission yeast)).